Here is a 121-residue protein sequence, read N- to C-terminus: Flagellar protein FliT (121 aa).

Positions 1 to 50 (MNNAPHLYFAWQQLVEKSQLMLRLATEEQWDELIASEMAYVNAVQEIAHL) are required for homodimerization. A fliD binding region spans residues 60 to 98 (MQEQLRPMLHLILDNESKVKQLLQIRMDELAKLVGQSSV).

This sequence belongs to the FliT family. Homodimer. Interacts with FliD and FlhC.

Its subcellular location is the cytoplasm. It is found in the cytosol. Functionally, dual-function protein that regulates the transcription of class 2 flagellar operons and that also acts as an export chaperone for the filament-capping protein FliD. As a transcriptional regulator, acts as an anti-FlhDC factor; it directly binds FlhC, thus inhibiting the binding of the FlhC/FlhD complex to class 2 promoters, resulting in decreased expression of class 2 flagellar operons. As a chaperone, effects FliD transition to the membrane by preventing its premature polymerization, and by directing it to the export apparatus. The sequence is that of Flagellar protein FliT from Shigella flexneri serotype 5b (strain 8401).